A 136-amino-acid chain; its full sequence is Mitochondrial pyruvate carrier 1-like protein (136 aa).

Topologically, residues 2 to 19 (ARMAVLWRKMRDNFQSKE) are mitochondrial matrix. The helical transmembrane segment at 20–42 (FREYVSSTHFWGPAFSWGLPLAA) threads the bilayer. The Mother cell cytoplasmic segment spans residues 43 to 51 (FKDMKASPE). A helical membrane pass occupies residues 52 to 74 (IISGRMTTALILYSAIFMRFAYR). The Mitochondrial matrix segment spans residues 75-136 (VQPRNLLLMA…PGSQPPKQAS (62 aa)). The tract at residues 111–136 (EAKARDPPATAAAATSPGSQPPKQAS) is disordered. Low complexity predominate over residues 117 to 136 (PPATAAAATSPGSQPPKQAS).

It belongs to the mitochondrial pyruvate carrier (MPC) (TC 2.A.105) family.

Its subcellular location is the mitochondrion inner membrane. It catalyses the reaction pyruvate(out) + H(+)(out) = pyruvate(in) + H(+)(in). Functionally, mediates the uptake of pyruvate into mitochondria. The chain is Mitochondrial pyruvate carrier 1-like protein (MPC1L) from Homo sapiens (Human).